The sequence spans 139 residues: Transcription antitermination protein NusB (139 aa).

Belongs to the NusB family.

Its function is as follows. Involved in transcription antitermination. Required for transcription of ribosomal RNA (rRNA) genes. Binds specifically to the boxA antiterminator sequence of the ribosomal RNA (rrn) operons. This Lactiplantibacillus plantarum (strain ATCC BAA-793 / NCIMB 8826 / WCFS1) (Lactobacillus plantarum) protein is Transcription antitermination protein NusB.